Here is a 512-residue protein sequence, read N- to C-terminus: GMP synthase [glutamine-hydrolyzing] (512 aa).

One can recognise a Glutamine amidotransferase type-1 domain in the interval 5-195; sequence GIVILDFGSQ…IFGIAKAEKN (191 aa). C82 (nucleophile) is an active-site residue. Residues H169 and E171 contribute to the active site. Positions 196-387 constitute a GMPS ATP-PPase domain; the sequence is WSMENYIEST…LGIPDYMVDR (192 aa). 223–229 contacts ATP; that stretch reads SGGVDSS.

As to quaternary structure, homodimer.

The catalysed reaction is XMP + L-glutamine + ATP + H2O = GMP + L-glutamate + AMP + diphosphate + 2 H(+). Its pathway is purine metabolism; GMP biosynthesis; GMP from XMP (L-Gln route): step 1/1. In terms of biological role, catalyzes the synthesis of GMP from XMP. The polypeptide is GMP synthase [glutamine-hydrolyzing] (Fusobacterium nucleatum subsp. nucleatum (strain ATCC 25586 / DSM 15643 / BCRC 10681 / CIP 101130 / JCM 8532 / KCTC 2640 / LMG 13131 / VPI 4355)).